Consider the following 503-residue polypeptide: Alpha-1B-glycoprotein (503 aa).

Residues 1–21 (MSAWAALLLLWGLSLSPVTEQ) form the signal peptide. Ig-like V-type domains follow at residues 27-115 (PRPS…EVTG), 117-204 (EPLP…TVTI), 208-305 (DPPP…LVLS), 307-405 (GTLP…LRVD), and 406-501 (GPLP…LRVA). An intrachain disulfide couples cysteine 49 to cysteine 96. Asparagine 137 and asparagine 182 each carry an N-linked (GlcNAc...) asparagine glycan. Cystine bridges form between cysteine 142/cysteine 185, cysteine 235/cysteine 282, cysteine 333/cysteine 382, and cysteine 431/cysteine 478. Asparagine 379 carries N-linked (GlcNAc...) asparagine glycosylation.

Interacts with CRISP3. As to expression, plasma.

The protein localises to the secreted. In Bos taurus (Bovine), this protein is Alpha-1B-glycoprotein.